The primary structure comprises 392 residues: Tyrosine--tRNA ligase (392 aa).

The 'HIGH' region motif lies at 41 to 50; it reads PTAPDLHLGH. Residues 225–229 carry the 'KMSKS' region motif; sequence KMSKS. An ATP-binding site is contributed by lysine 228. The S4 RNA-binding domain maps to 330–390; the sequence is LRAVDFLVKI…VGKKKFYRVV (61 aa).

It belongs to the class-I aminoacyl-tRNA synthetase family. TyrS type 2 subfamily. In terms of assembly, homodimer.

It is found in the cytoplasm. It catalyses the reaction tRNA(Tyr) + L-tyrosine + ATP = L-tyrosyl-tRNA(Tyr) + AMP + diphosphate + H(+). Catalyzes the attachment of tyrosine to tRNA(Tyr) in a two-step reaction: tyrosine is first activated by ATP to form Tyr-AMP and then transferred to the acceptor end of tRNA(Tyr). This Aquifex aeolicus (strain VF5) protein is Tyrosine--tRNA ligase.